A 462-amino-acid chain; its full sequence is Trigger factor (462 aa).

Residues 172–257 enclose the PPIase FKBP-type domain; it reads GDKATIDFVG…LKALAAPGET (86 aa). Positions 443–462 are disordered; sequence LLAADEEDEEEAAESSAALV. Residues 444 to 455 are compositionally biased toward acidic residues; that stretch reads LAADEEDEEEAA.

It belongs to the FKBP-type PPIase family. Tig subfamily.

Its subcellular location is the cytoplasm. The catalysed reaction is [protein]-peptidylproline (omega=180) = [protein]-peptidylproline (omega=0). In terms of biological role, involved in protein export. Acts as a chaperone by maintaining the newly synthesized protein in an open conformation. Functions as a peptidyl-prolyl cis-trans isomerase. The protein is Trigger factor of Methylocella silvestris (strain DSM 15510 / CIP 108128 / LMG 27833 / NCIMB 13906 / BL2).